A 404-amino-acid polypeptide reads, in one-letter code: Cysteine desulfurase IscS (404 aa).

Residues 75-76 (AT), asparagine 155, glutamine 183, and 203-205 (SGH) each bind pyridoxal 5'-phosphate. Lysine 206 bears the N6-(pyridoxal phosphate)lysine mark. Residue threonine 243 coordinates pyridoxal 5'-phosphate. The Cysteine persulfide intermediate role is filled by cysteine 328. Residue cysteine 328 participates in [2Fe-2S] cluster binding.

Belongs to the class-V pyridoxal-phosphate-dependent aminotransferase family. NifS/IscS subfamily. Homodimer. Forms a heterotetramer with IscU, interacts with other sulfur acceptors. It depends on pyridoxal 5'-phosphate as a cofactor.

The protein localises to the cytoplasm. The enzyme catalyses (sulfur carrier)-H + L-cysteine = (sulfur carrier)-SH + L-alanine. Its pathway is cofactor biosynthesis; iron-sulfur cluster biosynthesis. Its function is as follows. Master enzyme that delivers sulfur to a number of partners involved in Fe-S cluster assembly, tRNA modification or cofactor biosynthesis. Catalyzes the removal of elemental sulfur atoms from cysteine to produce alanine. Functions as a sulfur delivery protein for Fe-S cluster synthesis onto IscU, an Fe-S scaffold assembly protein, as well as other S acceptor proteins. This Klebsiella pneumoniae subsp. pneumoniae (strain ATCC 700721 / MGH 78578) protein is Cysteine desulfurase IscS.